Consider the following 69-residue polypeptide: U5-agatoxin-Ao1a (69 aa).

The N-terminal stretch at 1–20 (MRTIISLLLLSAMVFAVIEA) is a signal peptide. The propeptide occupies 21-34 (ISLEEGLQLFEGER). Disulfide bonds link Cys36-Cys52 and Cys43-Cys57.

Belongs to the neurotoxin 01 (U2-agtx) family. Does not contain a cysteine at position 61 which disrupts the cysteine framework. As to expression, expressed by the venom gland.

The protein localises to the secreted. This is U5-agatoxin-Ao1a from Agelena orientalis (Funnel-web spider).